A 210-amino-acid polypeptide reads, in one-letter code: Actin-related protein 3C (210 aa).

An N-terminal signal peptide occupies residues 1–21 (MFESFNVPGLYIAVQAVLALA).

This sequence belongs to the actin family. In terms of tissue distribution, expressed in kidney, stomach, spleen, bone marrow, uterus, testis, placenta, skeletal muscle, mammary gland, lung, fetal liver, and fetal kidney, but not detected in small intestine, brain, and thymus. Expressed in low-metastatic lung adenocarcinoma cells but not in high-metastatic ones.

May play a role in the suppression of metastatic potential in lung adenoma carcinoma cells. This Homo sapiens (Human) protein is Actin-related protein 3C (ACTR3C).